Consider the following 209-residue polypeptide: NAD(P)H-quinone oxidoreductase subunit I (209 aa).

4Fe-4S ferredoxin-type domains are found at residues 55 to 84 (GRIH…VDWE) and 95 to 124 (KHYS…MTEE). [4Fe-4S] cluster is bound by residues Cys64, Cys67, Cys70, Cys74, Cys104, Cys107, Cys110, and Cys114.

Belongs to the complex I 23 kDa subunit family. In terms of assembly, NDH-1 is composed of at least 11 different subunits. It depends on [4Fe-4S] cluster as a cofactor.

It localises to the cellular thylakoid membrane. The enzyme catalyses a plastoquinone + NADH + (n+1) H(+)(in) = a plastoquinol + NAD(+) + n H(+)(out). The catalysed reaction is a plastoquinone + NADPH + (n+1) H(+)(in) = a plastoquinol + NADP(+) + n H(+)(out). Its function is as follows. NDH-1 shuttles electrons from an unknown electron donor, via FMN and iron-sulfur (Fe-S) centers, to quinones in the respiratory and/or the photosynthetic chain. The immediate electron acceptor for the enzyme in this species is believed to be plastoquinone. Couples the redox reaction to proton translocation, and thus conserves the redox energy in a proton gradient. The chain is NAD(P)H-quinone oxidoreductase subunit I from Trichodesmium erythraeum (strain IMS101).